A 315-amino-acid chain; its full sequence is Zinc finger transcription factor ref-2 (315 aa).

A C2H2-type 1; atypical zinc finger spans residues 83-112 (VQCLWETNGQVCMHVCQNSGELSTHISSNH). A C2H2-type 2; degenerate zinc finger spans residues 124 to 146 (KGCDREFKMFKAKYKLVNHMRVH). C2H2-type zinc fingers lie at residues 152–174 (FLCDVCNKVFARSENLKIHKRIH), 180–204 (FQCTHNGCTKLFANSSDRKKHMHVH), and 210–234 (YSCMYPDCGKTYTHPSSLRKHTKVH). The interval 225–270 (SSLRKHTKVHENEKKSQLSPEHDESSDSGNASIGTPTTDESLTFSP) is disordered. Positions 233 to 249 (VHENEKKSQLSPEHDES) are enriched in basic and acidic residues. A compositionally biased stretch (polar residues) spans 251 to 270 (DSGNASIGTPTTDESLTFSP).

As to quaternary structure, interacts with TCF transcription factor pop-1; the interaction is direct and facilitates transcriptional activation; transcription may be repressed by beta-catenin/sys-1.

Its subcellular location is the nucleus. The protein localises to the cytoplasm. Its function is as follows. Transcription factor. Modulates expression of target genes by binding to regulatory elements. Required for normal cell division timing and cell positioning in anterior lineages, acting in a cell-autonomous manner. Required for development, fusion and fate of cells of the ventral epidermis, the Pn.p cells, during larval development; acts in concert with homeobox genes lin-39 and mab-5. Required for the specification of the AIY interneuron. In complex with TCF transcription factor pop-1, positively modulates expression of LIM/homeobox protein ttx-3 in anterior daughter cells of the SMDD/AIY neuron lineage. The sequence is that of Zinc finger transcription factor ref-2 from Caenorhabditis elegans.